We begin with the raw amino-acid sequence, 206 residues long: Protease (206 aa).

Residues His-55, Asp-72, and Cys-122 contribute to the active site.

This sequence belongs to the peptidase C5 family. In terms of assembly, interacts with protease cofactor pVI-C; this interaction is necessary for protease activation.

The protein localises to the virion. The protein resides in the host nucleus. The catalysed reaction is Cleaves proteins of the adenovirus and its host cell at two consensus sites: -Yaa-Xaa-Gly-Gly-|-Xaa- and -Yaa-Xaa-Gly-Xaa-|-Gly- (in which Yaa is Met, Ile or Leu, and Xaa is any amino acid).. With respect to regulation, requires DNA and protease cofactor for maximal activation. Inside nascent virions, becomes partially activated by binding to the viral DNA, allowing it to cleave the cofactor that binds to the protease and fully activates it. Actin, like the viral protease cofactor, seems to act as a cofactor in the cleavage of cytokeratin 18 and of actin itself. Its function is as follows. Cleaves viral precursor proteins (pTP, pIIIa, pVI, pVII, pVIII, and pX) inside newly assembled particles giving rise to mature virions. Protease complexed to its cofactor slides along the viral DNA to specifically locate and cleave the viral precursors. Mature virions have a weakened organization compared to the unmature virions, thereby facilitating subsequent uncoating. Without maturation, the particle lacks infectivity and is unable to uncoat. Late in adenovirus infection, in the cytoplasm, may participate in the cytoskeleton destruction. Cleaves host cell cytoskeletal keratins K7 and K18. The protein is Protease of Fowl adenovirus A serotype 1 (strain CELO / Phelps) (FAdV-1).